Reading from the N-terminus, the 304-residue chain is Acetylglutamate kinase (304 aa).

Residues 69–70, R91, and N202 contribute to the substrate site; that span reads GG.

It belongs to the acetylglutamate kinase family. ArgB subfamily.

It localises to the cytoplasm. It carries out the reaction N-acetyl-L-glutamate + ATP = N-acetyl-L-glutamyl 5-phosphate + ADP. It functions in the pathway amino-acid biosynthesis; L-arginine biosynthesis; N(2)-acetyl-L-ornithine from L-glutamate: step 2/4. Catalyzes the ATP-dependent phosphorylation of N-acetyl-L-glutamate. The chain is Acetylglutamate kinase from Caulobacter vibrioides (strain ATCC 19089 / CIP 103742 / CB 15) (Caulobacter crescentus).